A 232-amino-acid polypeptide reads, in one-letter code: uncharacterized protein (232 aa).

The interval Met-1–Asp-46 is disordered. The span at Ser-28 to Asp-46 shows a compositional bias: basic and acidic residues.

This is an uncharacterized protein from Rhizobium meliloti (Ensifer meliloti).